Consider the following 337-residue polypeptide: Nodulation protein D 2 (337 aa).

The region spanning Leu-6 to Thr-63 is the HTH lysR-type domain. The H-T-H motif DNA-binding region spans Leu-23–Ala-42.

It belongs to the LysR transcriptional regulatory family.

In terms of biological role, nodD regulates the expression of the nodABCFE genes which encode other nodulation proteins. NodD is also a negative regulator of its own expression. Binds flavonoids as inducers. This chain is Nodulation protein D 2 (nodD2), found in Bradyrhizobium sp. (strain NC92).